The following is a 768-amino-acid chain: MAAGMLTDREREAIVSNLTKDVQALREMVRSRESELVKLHREIHKLKSVLQQTTNNLNVTRNEKAKKKLYSLPEQCGEQESRNQNPHLCSSCGMVLPTSPEFALEALSLGPLSPLASTSSASPSGRTSADEVRPKAMPAAIKKQGVSAESCVQSMQQSYSIPIPKYEKDFSDKQQIKDAIMDNDFLKNIDASQVRELVDSMYSKSIAAGEFVIREGEVGAHLYVSAAGEFAVMQQGKVLDKMGAGKAFGELAILYNCTRTASIRVLSEAARVWVLDRRVFQQIMMCTGLQRIENSVNFLRSVPLLMNLSEELLAKIADVLELEFYAAGTYIIRQGTAGDSFFLISQGNVRVTQKLTPTSPEETELRTLSRGDYFGEQALINEDKRTANIIALSPGVECLTLDRDSFKRLIGDLCELKEKDYGDESRKLAMKQAQESCRDEPKEQLQQEFPDLKLTDLEVVSTLGIGGFGRVELVKAHHQDRVDIFALKCLKKRHIVDTKQEEHIFSERHIMLSSRSPFICRLYRTFRDEKYVYMLLEACMGGEIWTMLRDRGSFEDNAAQFIIGCVLQAFEYLHARGIIYRDLKPENLMLDERGYVKIVDFGFAKQIGTSSKTWTFCGTPEYVAPEIILNKGHDRAVDYWALGILIHELLNGTPPFSAPDPMQTYNLILKGIDMIAFPKHISRWAVQLIKRLCRDVPSERLGYQTGGIQDIKKHKWFLGFDWDGLASQLLIPPFVRPIAHPTDVRYFDRFPCDLNEPPDELSGWDADF.

The interval M1 to S192 is regulatory. Positions P114–T127 are enriched in low complexity. Residues P114–P134 are disordered. Residues G249–A252, R259–T260, R366, G375–A378, R385–T386, and Y421 each bind 3',5'-cyclic GMP. The Protein kinase domain occupies L457–F717. Residues L463–V471 and K488 contribute to the ATP site. D582 serves as the catalytic Proton acceptor. The region spanning L718–F768 is the AGC-kinase C-terminal domain.

It belongs to the protein kinase superfamily. AGC Ser/Thr protein kinase family. cGMP subfamily. Homodimer. Mg(2+) is required as a cofactor. Autophosphorylated. As to expression, in embryo stage 13, expression is seen in a few large, irregular cells having the appearance of hemocytes or macrophages. In adults, expression is seen in optic lamina and weakly in testis.

The enzyme catalyses L-seryl-[protein] + ATP = O-phospho-L-seryl-[protein] + ADP + H(+). It carries out the reaction L-threonyl-[protein] + ATP = O-phospho-L-threonyl-[protein] + ADP + H(+). Its activity is regulated as follows. Binding of cGMP results in enzyme activation. This is cGMP-dependent protein kinase, isozyme 1 (Pkg21D) from Drosophila melanogaster (Fruit fly).